Consider the following 216-residue polypeptide: uncharacterized protein (216 aa).

This is an uncharacterized protein from Treponema pallidum (strain Nichols).